Here is a 718-residue protein sequence, read N- to C-terminus: Protein Hook homolog 1 (718 aa).

Residues 8 to 124 (PLLCDSLILW…RLMQLILGCA (117 aa)) enclose the Calponin-homology (CH) domain. Coiled coils occupy residues 164–428 (SASD…ELRY) and 473–652 (LLLQ…AKLR).

This sequence belongs to the hook family. Interacts with microtubules.

Its subcellular location is the cytoplasm. The protein resides in the cytoskeleton. Its function is as follows. May function to promote vesicle trafficking and/or fusion. This Gallus gallus (Chicken) protein is Protein Hook homolog 1 (HOOK1).